A 129-amino-acid chain; its full sequence is Lysozyme C, milk isozyme (129 aa).

Positions 1–129 (KVFSKCELAH…LSEYLASCNL (129 aa)) constitute a C-type lysozyme domain. 4 disulfides stabilise this stretch: cysteine 6–cysteine 127, cysteine 30–cysteine 115, cysteine 65–cysteine 80, and cysteine 76–cysteine 94. Catalysis depends on residues glutamate 35 and aspartate 53. 5 residues coordinate Ca(2+): lysine 82, aspartate 85, asparagine 87, aspartate 90, and aspartate 91.

It belongs to the glycosyl hydrolase 22 family. As to quaternary structure, monomer. It depends on Ca(2+) as a cofactor.

It carries out the reaction Hydrolysis of (1-&gt;4)-beta-linkages between N-acetylmuramic acid and N-acetyl-D-glucosamine residues in a peptidoglycan and between N-acetyl-D-glucosamine residues in chitodextrins.. Functionally, lysozymes have primarily a bacteriolytic function; those in tissues and body fluids are associated with the monocyte-macrophage system and enhance the activity of immunoagents. This is Lysozyme C, milk isozyme (LYZ) from Equus caballus (Horse).